The following is a 140-amino-acid chain: Midkine (140 aa).

The signal sequence occupies residues 1–22 (MQHRGFFLLALLALLVVTSAVA). 5 disulfide bridges follow: Cys-34/Cys-58, Cys-42/Cys-67, Cys-49/Cys-71, Cys-81/Cys-113, and Cys-91/Cys-123.

Belongs to the pleiotrophin family. As to quaternary structure, homodimer. Interacts with ALK. Interacts with LRP1; promotes neuronal survival. Interacts with LRP2. Interacts with NCAM1. Interacts (via C-terminal) with PTPRZ1 (via chondroitin sulfate chains); this interaction is inhibited by PTN; this interaction promotes neuronal migration. Interacts with NCL; this interaction promotes NCL clustering and lateral movements of this complex into lipid rafts leading to MDK internalization. Interacts with LRP6 and LRP8: this interaction is calcium dependent. Interacts with ITGA4. Interacts with ITGA6. Interacts with ITGB1. Interacts with ITGA4:ITGB1 complex; this interaction mediates MDK-induced osteoblast cells migration through PXN phosphorylation. Interacts with ITGA6:ITGB1 complex; this interaction mediates MDK-induced neurite outgrowth. Interacts with NOTCH2; this interactio mediates a nuclear accumulation of NOTCH2 and therefore activation of NOTCH2 signaling leading to interaction between HES1 and STAT3. Interacts with GPC2 (via heparan sulfate chain); this interaction is inhibited by heparin followed by chondroitin sulfate E; this interaction induces GPC2 clustering through heparan sulfate chain; this interaction induces neuronal cell adhesion and neurite outgrowth. Interacts with SDC3; this interaction induces SDC3 clustering; this interaction induces neuronal cell adhesion and neurite outgrowth. Interacts with SDC1. Interacts with CSPG5; this interaction promotes elongation of oligodendroglial precursor-like cells. Expressed in the follicular epithelium and granulosa cells of the ovary.

The protein resides in the secreted. Functionally, secreted protein that functions as a cytokine and growth factor and mediates its signal through cell-surface proteoglycan and non-proteoglycan receptors. Binds cell-surface proteoglycan receptors via their chondroitin sulfate (CS) groups. Thereby regulates many processes like inflammatory response, cell proliferation, cell adhesion, cell growth, cell survival, tissue regeneration, cell differentiation and cell migration. Participates in inflammatory processes by exerting two different activities. Firstly, mediates neutrophils and macrophages recruitment to the sites of inflammation both by direct action by cooperating namely with ITGB2 via LRP1 and by inducing chemokine expression. This inflammation can be accompanied by epithelial cell survival and smooth muscle cell migration after renal and vessel damage, respectively. Secondly, suppresses the development of tolerogenic dendric cells thereby inhibiting the differentiation of regulatory T cells and also promote T cell expansion through NFAT signaling and Th1 cell differentiation. Promotes tissue regeneration after injury or trauma. After heart damage negatively regulates the recruitment of inflammatory cells and mediates cell survival through activation of anti-apoptotic signaling pathways via MAPKs and AKT pathways through the activation of angiogenesis. Also facilitates liver regeneration as well as bone repair by recruiting macrophage at trauma site and by promoting cartilage development by facilitating chondrocyte differentiation. Plays a role in brain by promoting neural precursor cells survival and growth through interaction with heparan sulfate proteoglycans. Binds PTPRZ1 and promotes neuronal migration and embryonic neurons survival. Binds SDC3 or GPC2 and mediates neurite outgrowth and cell adhesion. Binds chondroitin sulfate E and heparin leading to inhibition of neuronal cell adhesion induced by binding with GPC2. Binds CSPG5 and promotes elongation of oligodendroglial precursor-like cells. Also binds ITGA6:ITGB1 complex; this interaction mediates MDK-induced neurite outgrowth. Binds LRP1; promotes neuronal survival. Binds ITGA4:ITGB1 complex; this interaction mediates MDK-induced osteoblast cells migration through PXN phosphorylation. Binds anaplastic lymphoma kinase (ALK) which induces ALK activation and subsequent phosphorylation of the insulin receptor substrate (IRS1), followed by the activation of mitogen-activated protein kinase (MAPK) and PI3-kinase, and the induction of cell proliferation. Promotes epithelial to mesenchymal transition through interaction with NOTCH2. During arteriogenesis, plays a role in vascular endothelial cell proliferation by inducing VEGFA expression and release which in turn induces nitric oxide synthase expression. Moreover activates vasodilation through nitric oxide synthase activation. Negatively regulates bone formation in response to mechanical load by inhibiting Wnt/beta-catenin signaling in osteoblasts. In addition plays a role in hippocampal development, working memory, auditory response, early fetal adrenal gland development and the female reproductive system. This Mus musculus (Mouse) protein is Midkine.